Consider the following 228-residue polypeptide: 5'-methylthioadenosine/S-adenosylhomocysteine nucleosidase (228 aa).

Glutamate 11 functions as the Proton acceptor in the catalytic mechanism. Residues glycine 77, isoleucine 151, and 172 to 173 contribute to the substrate site; that span reads ME. Aspartate 196 serves as the catalytic Proton donor.

Belongs to the PNP/UDP phosphorylase family. MtnN subfamily.

It carries out the reaction S-adenosyl-L-homocysteine + H2O = S-(5-deoxy-D-ribos-5-yl)-L-homocysteine + adenine. The enzyme catalyses S-methyl-5'-thioadenosine + H2O = 5-(methylsulfanyl)-D-ribose + adenine. The catalysed reaction is 5'-deoxyadenosine + H2O = 5-deoxy-D-ribose + adenine. It functions in the pathway amino-acid biosynthesis; L-methionine biosynthesis via salvage pathway; S-methyl-5-thio-alpha-D-ribose 1-phosphate from S-methyl-5'-thioadenosine (hydrolase route): step 1/2. Catalyzes the irreversible cleavage of the glycosidic bond in both 5'-methylthioadenosine (MTA) and S-adenosylhomocysteine (SAH/AdoHcy) to adenine and the corresponding thioribose, 5'-methylthioribose and S-ribosylhomocysteine, respectively. Also cleaves 5'-deoxyadenosine, a toxic by-product of radical S-adenosylmethionine (SAM) enzymes, into 5-deoxyribose and adenine. This Staphylococcus aureus (strain MRSA252) protein is 5'-methylthioadenosine/S-adenosylhomocysteine nucleosidase.